A 202-amino-acid polypeptide reads, in one-letter code: Protein cuti-1 (202 aa).

Over 1 to 37 (MPNDRVAPLPPNFVYSPHDKFYYAPATCNSMHYTTAS) the chain is Cytoplasmic. The helical transmembrane segment at 38–58 (YISAFIEFLVMGTGAICFYVM) threads the bilayer. Residues 59–68 (SHKSDSIGKW) are Extracellular-facing. Residues 69–89 (LFYIQAGITVLSLLTSALMAF) traverse the membrane as a helical segment. At 90–107 (GLWKENPQMLGSKLKFIE) the chain is on the cytoplasmic side. Residues 108–128 (FIICFLLIWAVISIVCMAFGI) form a helical membrane-spanning segment. The Extracellular segment spans residues 129 to 148 (QFTRQVFGIFGKVHRIEQDY). Residues 149–169 (GPIWPFNIAVVSFFTAAIAIW) traverse the membrane as a helical segment. The Cytoplasmic portion of the chain corresponds to 170–202 (TRIIIQGAADYLYDKAYFADKQNVELRESSKTR).

Interacts with vps-39.

The protein localises to the cell membrane. Its subcellular location is the cytoplasm. Involved in cuticle formation and ensures cuticle shedding during larval development. Plays a role in maintaining the hypodermis. In association with vps-39, may play a role in vesicle tethering. This chain is Protein cuti-1, found in Caenorhabditis elegans.